We begin with the raw amino-acid sequence, 387 residues long: Phosphoglycerate kinase (387 aa).

Substrate contacts are provided by residues 21–23, R36, 59–62, R113, and R146; these read DLN and HLGR. ATP contacts are provided by residues K197, E314, and 340 to 343; that span reads GGDT.

The protein belongs to the phosphoglycerate kinase family. Monomer.

The protein localises to the cytoplasm. The catalysed reaction is (2R)-3-phosphoglycerate + ATP = (2R)-3-phospho-glyceroyl phosphate + ADP. It functions in the pathway carbohydrate degradation; glycolysis; pyruvate from D-glyceraldehyde 3-phosphate: step 2/5. This Aeromonas hydrophila subsp. hydrophila (strain ATCC 7966 / DSM 30187 / BCRC 13018 / CCUG 14551 / JCM 1027 / KCTC 2358 / NCIMB 9240 / NCTC 8049) protein is Phosphoglycerate kinase.